The chain runs to 418 residues: Pentatricopeptide repeat-containing protein At2g18520, mitochondrial (418 aa).

A mitochondrion-targeting transit peptide spans 1-14; that stretch reads MTSSRLYLRFLRRF. PPR repeat units follow at residues 101–135, 136–166, 173–207, 208–242, 243–276, 277–311, 312–342, and 343–373; these read TETF…GTPR, TVVS…FPQR, DKIS…GVEV, TIIA…GCDL, DNTV…GLKP, DTVS…NAAT, FRTL…HKIP, and DFKT…VKKK.

It belongs to the PPR family. P subfamily.

The protein resides in the mitochondrion. The sequence is that of Pentatricopeptide repeat-containing protein At2g18520, mitochondrial from Arabidopsis thaliana (Mouse-ear cress).